A 93-amino-acid polypeptide reads, in one-letter code: uncharacterized protein (93 aa).

The tract at residues 41 to 62 (RSANRIPTTSSTSTSGTIPTTT) is disordered. Over residues 46-62 (IPTTSSTSTSGTIPTTT) the composition is skewed to low complexity.

This is an uncharacterized protein from Dictyostelium discoideum (Social amoeba).